The following is a 259-amino-acid chain: F-box/kelch-repeat protein At2g22050 (259 aa).

Positions 1–12 (MSPSSKKFKKQS) are enriched in basic residues. The disordered stretch occupies residues 1–29 (MSPSSKKFKKQSSSKSVKPPLEDNDPSLP). The F-box domain occupies 28 to 76 (LPSFTSLPDEIVLDCLQRVPRSYYLNLCRVSKTLRSLVRSPELSRLRTL). The stretch at 142-186 (EIYFVGGSFEPMSELWILDTRTGMFRQGPSMKVARTDEASVGVIN) is one Kelch repeat.

This Arabidopsis thaliana (Mouse-ear cress) protein is F-box/kelch-repeat protein At2g22050.